A 789-amino-acid polypeptide reads, in one-letter code: MTSFQEVPLQTSNFAHVIFQNVAKSYLPNAHLECHYTLTPYIHPHPKDWVGIFKVGWSTARDYYTFLWSPMPEHYVEGSTVNCVLAFQGYYLPNDDGEFYQFCYVTHKGEIRGASTPFQFRASSPVEELLTMEDEGNSDMLVVTTKAGLLELKIEKTMKEKEELLKLIAVLEKETAQLREQVGRMERELNHEKERCDQLQAEQKGLTEVTQSLKMENEEFKKRFSDATSKAHQLEEDIVSVTHKAIEKETELDSLKDKLKKAQHEREQLECQLKTEKDEKELYKVHLKNTEIENTKLMSEVQTLKNLDGNKESVITHFKEEIGRLQLCLAEKENLQRTFLLTTSSKEDTCFLKEQLRKAEEQVQATRQEVVFLAKELSDAVNVRDRTMADLHTARLENEKVKKQLADAVAELKLNAMKKDQDKTDTLEHELRREVEDLKLRLQMAADHYKEKFKECQRLQKQINKLSDQSANNNNVFTKKTGNQQKVNDASVNTDPATSASTVDVKPSPSAAEADFDIVTKGQVCEMTKEIADKTEKYNKCKQLLQDEKAKCNKYADELAKMELKWKEQVKIAENVKLELAEVQDNYKELKRSLENPAERKMEGQNSQSPQCFKTCSEQNGYVLTLSNAQPVLQYGNPYASQETRDGADGAFYPDEIQRPPVRVPSWGLEDNVVCSQPARNFSRPDGLEDSEDSKEDENVPTAPDPPSQHLRGHGTGFCFDSSFDVHKKCPLCELMFPPNYDQSKFEEHVESHWKVCPMCSEQFPPDYDQQVFERHVQTHFDQNVLNFD.

Residues Ser124, Ser138, and Ser225 each carry the phosphoserine modification. Positions 144-599 (TTKAGLLELK…LKRSLENPAE (456 aa)) form a coiled coil. Residues 320 to 420 (EEIGRLQLCL…ELKLNAMKKD (101 aa)) are oligomerization. Positions 481-502 (TGNQQKVNDASVNTDPATSAST) are enriched in polar residues. The segment at 481–508 (TGNQQKVNDASVNTDPATSASTVDVKPS) is disordered. Ser593 bears the Phosphoserine; by IKKA mark. Ser609 carries the post-translational modification Phosphoserine. Residues 639–660 (YASQETRDGADGAFYPDEIQRP) form a disordered region. Ser666 carries the post-translational modification Phosphoserine; by IKKA. The interval 678-712 (PARNFSRPDGLEDSEDSKEDENVPTAPDPPSQHLR) is disordered. UBZ1-type zinc fingers lie at residues 727 to 753 (HKKC…VESH) and 754 to 780 (WKVC…VQTH). Zn(2+) contacts are provided by Cys730, Cys733, His749, His753, Cys757, Cys760, His776, and His780.

Homooligomer. Interacts with TNFAIP3. Interacts with STARD13. Interacts with MYO6. Interacts with TOM1; the interaction is indirect and is mediated by MYO6, which acts as a bridge between TOM1 and TAX1BP1. Interacts with MAVS; this interaction induces MAVS polyubiquitination. Interacts with TNIP1. Interacts with TRAF6; this interaction mediates deubiquitination of TRAF6 and inhibition of NF-kappa-B activation. Interacts with RIPK1; this interaction negatively regulates RIPK1 ubiquitination. Interacts with NBR1. Interacts with TBK1. Interacts with RB1CC1. Interacts with SQSTM1. Interacts with AZI2. Interacts with TICAM1 and TRIM32; these interactions target TICAM1 to TAX1BP1-mediated selective autophagic degradation. As to quaternary structure, (Microbial infection) Interacts with the HTLV-1 protein Tax. In terms of assembly, (Microbial infection) Interacts with Respiratory syncytial virus protein N; this interaction may promote viral growth by inhibiting the innate immune response. (Microbial infection) Interacts with Lassa virus protein Z. As to quaternary structure, (Microbial infection) Interacts with Mopeia virus protein Z. In terms of processing, phosphorylated in the C-terminal region by CHUK/IKKA leading to NF-kappa-B signaling down-regulation. In terms of tissue distribution, expressed in all tissues tested.

It localises to the cytoplasm. Its subcellular location is the mitochondrion. The protein resides in the preautophagosomal structure. The protein localises to the cytoplasmic vesicle. It is found in the autophagosome. Its function is as follows. Ubiquitin-binding adapter that participates in inflammatory, antiviral and innate immune processes as well as selective autophagy regulation. Plays a key role in the negative regulation of NF-kappa-B and IRF3 signalings by acting as an adapter for the ubiquitin-editing enzyme A20/TNFAIP3 to bind and inactivate its substrates. Disrupts the interactions between the E3 ubiquitin ligase TRAF3 and TBK1/IKBKE to attenuate 'Lys63'-linked polyubiquitination of TBK1 and thereby IFN-beta production. Also recruits A20/TNFAIP3 to ubiquitinated signaling proteins TRAF6 and RIPK1, leading to their deubiquitination and disruption of IL-1 and TNF-induced NF-kappa-B signaling pathways. Inhibits virus-induced apoptosis by inducing the 'Lys-48'-linked polyubiquitination and degradation of MAVS via recruitment of the E3 ligase ITCH, thereby attenuating MAVS-mediated apoptosis signaling. As a macroautophagy/autophagy receptor, facilitates the xenophagic clearance of pathogenic bacteria such as Salmonella typhimurium and Mycobacterium tuberculosis. Upon NBR1 recruitment to the SQSTM1-ubiquitin condensates, acts as the major recruiter of RB1CC1 to these ubiquitin condensates to promote their autophagic degradation. Mediates the autophagic degradation of other substrates including TICAM1. The polypeptide is Tax1-binding protein 1 (TAX1BP1) (Homo sapiens (Human)).